Consider the following 444-residue polypeptide: MNRILRISETHPLTWRLRDDQKTVWIKEYCDKNGYLSLKKALKEMLPEDVINIVKESGLKGRGGAGFSTGLKWSLMSQNHSYTRERGYLICNADEMEPGTYKDRLLIEKIPHQLIEGIILSAYALNVSRAYIFLRGEYVQAEHILKQSIQEAINFGFIGLNILGSNFNIELVLHTGAGRYICGEETALINSLEGRRANPRSKPPFPAVFGLWGKPTCVNNVETLSNVPCIILNGVSWYKNLSKSSDTGTKLMGFSGNVRNPGVWELPFGTTAREILEDYAHGMKSGFSLKAWQPGGAGTDFLLEEHLDLPMDFKNISQAGSRLGTALSMAVDNKTSMVSLVYNIEKFFSRESCGLCTPCRDGLPWIVKILKSLEQNKGHKNDVKNLEKLCSHLSPGKTFCAHAPGAIEPLQSAIKYFRSEFESGINIRKRDLNKKIIGIQSNCI.

Residue 61–70 (GRGGAGFSTG) coordinates NAD(+). 176–223 (GAGRYICGEETALINSLEGRRANPRSKPPFPAVFGLWGKPTCVNNVET) serves as a coordination point for FMN. Cys-353, Cys-356, Cys-359, and Cys-400 together coordinate [4Fe-4S] cluster.

This sequence belongs to the complex I 51 kDa subunit family. As to quaternary structure, composed of 13 different subunits. Subunits NuoCD, E, F, and G constitute the peripheral sector of the complex. It depends on FMN as a cofactor. The cofactor is [4Fe-4S] cluster.

The enzyme catalyses a quinone + NADH + 5 H(+)(in) = a quinol + NAD(+) + 4 H(+)(out). In terms of biological role, NDH-1 shuttles electrons from NADH, via FMN and iron-sulfur (Fe-S) centers, to quinones in the respiratory chain. Couples the redox reaction to proton translocation (for every two electrons transferred, four hydrogen ions are translocated across the cytoplasmic membrane), and thus conserves the redox energy in a proton gradient. The protein is NADH-quinone oxidoreductase subunit F (nuoF) of Buchnera aphidicola subsp. Acyrthosiphon pisum (strain APS) (Acyrthosiphon pisum symbiotic bacterium).